The primary structure comprises 90 residues: Progonadoliberin-1 (90 aa).

A signal peptide spans 1–21 (MILKLMAGILLLTVCLEGCSS). Gln-22 is modified (pyrrolidone carboxylic acid). Gly-31 is modified (glycine amide).

This sequence belongs to the GnRH family. Post-translationally, the precursor is cleaved by ACE, which removes the Gly-Lys-Arg peptide at the C-terminus, leading to mature hormone. The mature form of Gonadoliberin-1 is also cleaved and degraded by ACE.

It is found in the secreted. In terms of biological role, stimulates the secretion of gonadotropins; it stimulates the secretion of both luteinizing and follicle-stimulating hormones. In Mus musculus (Mouse), this protein is Progonadoliberin-1 (Gnrh1).